A 303-amino-acid polypeptide reads, in one-letter code: N-acetyl-D-glucosamine kinase (303 aa).

ATP contacts are provided by residues 4–11 (GFDVGGTK) and 133–140 (GFGGGLIY). Zn(2+) is bound by residues histidine 157, cysteine 177, cysteine 179, and cysteine 184.

It belongs to the ROK (NagC/XylR) family. NagK subfamily.

The enzyme catalyses N-acetyl-D-glucosamine + ATP = N-acetyl-D-glucosamine 6-phosphate + ADP + H(+). It functions in the pathway cell wall biogenesis; peptidoglycan recycling. Its function is as follows. Catalyzes the phosphorylation of N-acetyl-D-glucosamine (GlcNAc) derived from cell-wall degradation, yielding GlcNAc-6-P. This Vibrio vulnificus (strain CMCP6) protein is N-acetyl-D-glucosamine kinase.